A 356-amino-acid chain; its full sequence is 3-dehydroquinate synthase (356 aa).

NAD(+)-binding positions include 69 to 74 (DGEKFK), 103 to 107 (GVIGD), 127 to 128 (TT), lysine 140, lysine 149, and 167 to 170 (CLKT). Zn(2+) contacts are provided by glutamate 182, histidine 245, and histidine 262.

Belongs to the sugar phosphate cyclases superfamily. Dehydroquinate synthase family. Co(2+) serves as cofactor. Requires Zn(2+) as cofactor. It depends on NAD(+) as a cofactor.

The protein resides in the cytoplasm. It catalyses the reaction 7-phospho-2-dehydro-3-deoxy-D-arabino-heptonate = 3-dehydroquinate + phosphate. The protein operates within metabolic intermediate biosynthesis; chorismate biosynthesis; chorismate from D-erythrose 4-phosphate and phosphoenolpyruvate: step 2/7. In terms of biological role, catalyzes the conversion of 3-deoxy-D-arabino-heptulosonate 7-phosphate (DAHP) to dehydroquinate (DHQ). In Psychromonas ingrahamii (strain DSM 17664 / CCUG 51855 / 37), this protein is 3-dehydroquinate synthase.